The sequence spans 331 residues: Protein RecA (331 aa).

66–73 (GPESSGKT) provides a ligand contact to ATP.

The protein belongs to the RecA family.

Its subcellular location is the cytoplasm. In terms of biological role, can catalyze the hydrolysis of ATP in the presence of single-stranded DNA, the ATP-dependent uptake of single-stranded DNA by duplex DNA, and the ATP-dependent hybridization of homologous single-stranded DNAs. It interacts with LexA causing its activation and leading to its autocatalytic cleavage. This Acholeplasma laidlawii protein is Protein RecA.